Reading from the N-terminus, the 827-residue chain is Periplasmic nitrate reductase (827 aa).

The tat-type signal signal peptide spans 1–32; that stretch reads MNLSRRDFMKANAALAAASVAGLIIPVKNVNA. One can recognise a 4Fe-4S Mo/W bis-MGD-type domain in the interval 37–93; it reads ITWDKAVCRFCGTGCAVLVGTKDGRVVASQGDPDAEVNRGLNCIKGYFLPKIMYGKD. 4 residues coordinate [4Fe-4S] cluster: cysteine 44, cysteine 47, cysteine 51, and cysteine 79. Residues lysine 81, glutamine 148, asparagine 173, cysteine 177, 210–217, 242–246, 261–263, methionine 372, glutamine 376, asparagine 482, 508–509, lysine 531, aspartate 558, and 717–726 each bind Mo-bis(molybdopterin guanine dinucleotide); these read WGSNMAEM, STFEH, QSD, SD, and TGRILEHWHT. Substrate is bound at residue phenylalanine 793. 2 residues coordinate Mo-bis(molybdopterin guanine dinucleotide): asparagine 801 and lysine 818.

This sequence belongs to the prokaryotic molybdopterin-containing oxidoreductase family. NasA/NapA/NarB subfamily. Component of the periplasmic nitrate reductase NapAB complex composed of NapA and NapB. [4Fe-4S] cluster serves as cofactor. The cofactor is Mo-bis(molybdopterin guanine dinucleotide). In terms of processing, predicted to be exported by the Tat system. The position of the signal peptide cleavage has not been experimentally proven.

Its subcellular location is the periplasm. It carries out the reaction 2 Fe(II)-[cytochrome] + nitrate + 2 H(+) = 2 Fe(III)-[cytochrome] + nitrite + H2O. Its function is as follows. Catalytic subunit of the periplasmic nitrate reductase complex NapAB. Receives electrons from NapB and catalyzes the reduction of nitrate to nitrite. This chain is Periplasmic nitrate reductase, found in Histophilus somni (strain 2336) (Haemophilus somnus).